The primary structure comprises 245 residues: D-aminoacyl-tRNA deacylase (245 aa).

This sequence belongs to the DtdA deacylase family. As to quaternary structure, monomer. Requires Zn(2+) as cofactor.

The catalysed reaction is a D-aminoacyl-tRNA + H2O = a tRNA + a D-alpha-amino acid + H(+). It carries out the reaction glycyl-tRNA(Ala) + H2O = tRNA(Ala) + glycine + H(+). In terms of biological role, D-aminoacyl-tRNA deacylase with broad substrate specificity. By recycling D-aminoacyl-tRNA to D-amino acids and free tRNA molecules, this enzyme counteracts the toxicity associated with the formation of D-aminoacyl-tRNA entities in vivo. The chain is D-aminoacyl-tRNA deacylase from Ignicoccus hospitalis (strain KIN4/I / DSM 18386 / JCM 14125).